Reading from the N-terminus, the 314-residue chain is Putative steroid dehydrogenase 1 (314 aa).

Residue 47 to 76 (ASWAVVTGATDGIGKSYSFELAKRGFNVYI) coordinates NADP(+). Residue Tyr202 is part of the active site.

The protein belongs to the short-chain dehydrogenases/reductases (SDR) family. 17-beta-HSD 3 subfamily.

The sequence is that of Putative steroid dehydrogenase 1 (stdh-1) from Caenorhabditis elegans.